A 144-amino-acid chain; its full sequence is Ribosomal RNA large subunit methyltransferase H (144 aa).

S-adenosyl-L-methionine is bound by residues Leu63, Gly92, and 111–116 (LSAMTL).

The protein belongs to the RNA methyltransferase RlmH family. As to quaternary structure, homodimer.

The protein resides in the cytoplasm. It carries out the reaction pseudouridine(1915) in 23S rRNA + S-adenosyl-L-methionine = N(3)-methylpseudouridine(1915) in 23S rRNA + S-adenosyl-L-homocysteine + H(+). Its function is as follows. Specifically methylates the pseudouridine at position 1915 (m3Psi1915) in 23S rRNA. This chain is Ribosomal RNA large subunit methyltransferase H, found in Prochlorococcus marinus (strain MIT 9313).